The chain runs to 351 residues: Histidinol-phosphate aminotransferase (351 aa).

Residue Lys-209 is modified to N6-(pyridoxal phosphate)lysine.

The protein belongs to the class-II pyridoxal-phosphate-dependent aminotransferase family. Histidinol-phosphate aminotransferase subfamily. As to quaternary structure, homodimer. The cofactor is pyridoxal 5'-phosphate.

The enzyme catalyses L-histidinol phosphate + 2-oxoglutarate = 3-(imidazol-4-yl)-2-oxopropyl phosphate + L-glutamate. Its pathway is amino-acid biosynthesis; L-histidine biosynthesis; L-histidine from 5-phospho-alpha-D-ribose 1-diphosphate: step 7/9. The sequence is that of Histidinol-phosphate aminotransferase from Chromohalobacter salexigens (strain ATCC BAA-138 / DSM 3043 / CIP 106854 / NCIMB 13768 / 1H11).